The sequence spans 210 residues: Uridine kinase (210 aa).

Residue 14–21 (GGSGSGKT) coordinates ATP.

Belongs to the uridine kinase family.

The protein localises to the cytoplasm. The enzyme catalyses uridine + ATP = UMP + ADP + H(+). It catalyses the reaction cytidine + ATP = CMP + ADP + H(+). It functions in the pathway pyrimidine metabolism; CTP biosynthesis via salvage pathway; CTP from cytidine: step 1/3. The protein operates within pyrimidine metabolism; UMP biosynthesis via salvage pathway; UMP from uridine: step 1/1. The chain is Uridine kinase from Deinococcus radiodurans (strain ATCC 13939 / DSM 20539 / JCM 16871 / CCUG 27074 / LMG 4051 / NBRC 15346 / NCIMB 9279 / VKM B-1422 / R1).